We begin with the raw amino-acid sequence, 265 residues long: Phosphatidylserine decarboxylase proenzyme (265 aa).

Ser-183 (schiff-base intermediate with substrate; via pyruvic acid) is an active-site residue. Ser-183 carries the post-translational modification Pyruvic acid (Ser); by autocatalysis. The tract at residues 216–246 (TAPQTESEPESEPALQTAPVETAANPSAEQR) is disordered.

The protein belongs to the phosphatidylserine decarboxylase family. PSD-A subfamily. In terms of assembly, heterodimer of a large membrane-associated beta subunit and a small pyruvoyl-containing alpha subunit. It depends on pyruvate as a cofactor. Post-translationally, is synthesized initially as an inactive proenzyme. Formation of the active enzyme involves a self-maturation process in which the active site pyruvoyl group is generated from an internal serine residue via an autocatalytic post-translational modification. Two non-identical subunits are generated from the proenzyme in this reaction, and the pyruvate is formed at the N-terminus of the alpha chain, which is derived from the carboxyl end of the proenzyme. The post-translation cleavage follows an unusual pathway, termed non-hydrolytic serinolysis, in which the side chain hydroxyl group of the serine supplies its oxygen atom to form the C-terminus of the beta chain, while the remainder of the serine residue undergoes an oxidative deamination to produce ammonia and the pyruvoyl prosthetic group on the alpha chain.

It localises to the cell membrane. The enzyme catalyses a 1,2-diacyl-sn-glycero-3-phospho-L-serine + H(+) = a 1,2-diacyl-sn-glycero-3-phosphoethanolamine + CO2. It participates in phospholipid metabolism; phosphatidylethanolamine biosynthesis; phosphatidylethanolamine from CDP-diacylglycerol: step 2/2. Functionally, catalyzes the formation of phosphatidylethanolamine (PtdEtn) from phosphatidylserine (PtdSer). This chain is Phosphatidylserine decarboxylase proenzyme, found in Neisseria meningitidis serogroup B (strain ATCC BAA-335 / MC58).